The primary structure comprises 390 residues: GTPase Obg (390 aa).

In terms of domain architecture, Obg spans 1–159 (MKFVDEATIL…RELMLELLLL (159 aa)). The region spanning 160–333 (ADVGMLGLPN…LCWDVMNFLN (174 aa)) is the OBG-type G domain. GTP is bound by residues 166–173 (GLPNAGKS), 191–195 (FTTLI), 213–216 (DIPG), 283–286 (NKID), and 314–316 (SAA). 2 residues coordinate Mg(2+): Ser173 and Thr193. The segment covering 363–384 (EVEAEAESEDDDDWDEEDDDGV) has biased composition (acidic residues). The interval 363-390 (EVEAEAESEDDDDWDEEDDDGVEFIYER) is disordered.

Belongs to the TRAFAC class OBG-HflX-like GTPase superfamily. OBG GTPase family. In terms of assembly, monomer. It depends on Mg(2+) as a cofactor.

The protein localises to the cytoplasm. In terms of biological role, an essential GTPase which binds GTP, GDP and possibly (p)ppGpp with moderate affinity, with high nucleotide exchange rates and a fairly low GTP hydrolysis rate. Plays a role in control of the cell cycle, stress response, ribosome biogenesis and in those bacteria that undergo differentiation, in morphogenesis control. In Yersinia enterocolitica serotype O:8 / biotype 1B (strain NCTC 13174 / 8081), this protein is GTPase Obg.